The chain runs to 77 residues: NADH dehydrogenase [ubiquinone] 1 alpha subcomplex subunit 3 (77 aa).

The chain crosses the membrane as a helical span at residues 23-45 (IVGGSALALAGIVMATIGVANYY).

The protein belongs to the complex I NDUFA3 subunit family. As to quaternary structure, complex I is composed of 43 different subunits.

Its subcellular location is the mitochondrion inner membrane. It is found in the cytoplasm. It localises to the myofibril. The protein localises to the sarcomere. The protein resides in the z line. In terms of biological role, accessory subunit of the mitochondrial membrane respiratory chain NADH dehydrogenase (Complex I), that is believed not to be involved in catalysis. Complex I functions in the transfer of electrons from NADH to the respiratory chain. The immediate electron acceptor for the enzyme is believed to be ubiquinone. Required for the maintenance of muscle integrity and for cell proliferation in the wing imaginal disc epithelium, possibly by interacting with the chaperone-assisted selective autophagy (CASA) pathway. The polypeptide is NADH dehydrogenase [ubiquinone] 1 alpha subcomplex subunit 3 (Drosophila melanogaster (Fruit fly)).